The sequence spans 224 residues: tRNA pseudouridine synthase B (224 aa).

The active-site Nucleophile is the Asp46.

Belongs to the pseudouridine synthase TruB family. Type 1 subfamily.

The catalysed reaction is uridine(55) in tRNA = pseudouridine(55) in tRNA. Its function is as follows. Responsible for synthesis of pseudouridine from uracil-55 in the psi GC loop of transfer RNAs. The protein is tRNA pseudouridine synthase B of Methylococcus capsulatus (strain ATCC 33009 / NCIMB 11132 / Bath).